Here is an 875-residue protein sequence, read N- to C-terminus: Valine--tRNA ligase (875 aa).

The short motif at 41-51 (PNVTGSLHMGH) is the 'HIGH' region element. Residues 525–529 (KMSKS) carry the 'KMSKS' region motif. An ATP-binding site is contributed by Lys528. The stretch at 810-875 (VDLELIKKNL…ERISITIKGL (66 aa)) forms a coiled coil.

It belongs to the class-I aminoacyl-tRNA synthetase family. ValS type 1 subfamily. Monomer.

It localises to the cytoplasm. It catalyses the reaction tRNA(Val) + L-valine + ATP = L-valyl-tRNA(Val) + AMP + diphosphate. Functionally, catalyzes the attachment of valine to tRNA(Val). As ValRS can inadvertently accommodate and process structurally similar amino acids such as threonine, to avoid such errors, it has a 'posttransfer' editing activity that hydrolyzes mischarged Thr-tRNA(Val) in a tRNA-dependent manner. The polypeptide is Valine--tRNA ligase (Pelagibacter ubique (strain HTCC1062)).